Here is an 87-residue protein sequence, read N- to C-terminus: Beta-defensin 109C (87 aa).

Positions 1–22 are cleaved as a signal peptide; it reads MRLHLLLLILLLFSILLSPVRG. Disulfide bonds link Cys31-Cys59, Cys38-Cys53, and Cys43-Cys60.

It belongs to the beta-defensin family.

It is found in the secreted. In terms of biological role, has antibacterial activity. This Homo sapiens (Human) protein is Beta-defensin 109C (DEFB109C).